Here is a 308-residue protein sequence, read N- to C-terminus: Lipoyl synthase (308 aa).

Positions 51, 56, 62, 77, 81, 84, and 290 each coordinate [4Fe-4S] cluster. In terms of domain architecture, Radical SAM core spans 63–279; sequence WSKRHATFMI…ETIAKSKGFL (217 aa).

Belongs to the radical SAM superfamily. Lipoyl synthase family. Requires [4Fe-4S] cluster as cofactor.

It is found in the cytoplasm. The catalysed reaction is [[Fe-S] cluster scaffold protein carrying a second [4Fe-4S](2+) cluster] + N(6)-octanoyl-L-lysyl-[protein] + 2 oxidized [2Fe-2S]-[ferredoxin] + 2 S-adenosyl-L-methionine + 4 H(+) = [[Fe-S] cluster scaffold protein] + N(6)-[(R)-dihydrolipoyl]-L-lysyl-[protein] + 4 Fe(3+) + 2 hydrogen sulfide + 2 5'-deoxyadenosine + 2 L-methionine + 2 reduced [2Fe-2S]-[ferredoxin]. It participates in protein modification; protein lipoylation via endogenous pathway; protein N(6)-(lipoyl)lysine from octanoyl-[acyl-carrier-protein]: step 2/2. Catalyzes the radical-mediated insertion of two sulfur atoms into the C-6 and C-8 positions of the octanoyl moiety bound to the lipoyl domains of lipoate-dependent enzymes, thereby converting the octanoylated domains into lipoylated derivatives. The polypeptide is Lipoyl synthase (Pelagibacter ubique (strain HTCC1062)).